The chain runs to 558 residues: Potassium-transporting ATPase potassium-binding subunit (558 aa).

12 helical membrane-spanning segments follow: residues Met-1–Leu-21, Phe-66–Leu-86, Met-127–Ala-147, Ile-166–Met-186, Ile-245–Leu-265, Ala-281–Trp-301, Phe-327–Val-347, Leu-354–Gly-374, Val-377–Val-397, Ile-416–Met-436, Ile-482–Ile-502, and Ile-531–Ile-551.

The protein belongs to the KdpA family. As to quaternary structure, the system is composed of three essential subunits: KdpA, KdpB and KdpC.

It localises to the cell membrane. Functionally, part of the high-affinity ATP-driven potassium transport (or Kdp) system, which catalyzes the hydrolysis of ATP coupled with the electrogenic transport of potassium into the cytoplasm. This subunit binds the extracellular potassium ions and delivers the ions to the membrane domain of KdpB through an intramembrane tunnel. The chain is Potassium-transporting ATPase potassium-binding subunit from Staphylococcus aureus (strain USA300).